The sequence spans 268 residues: Small ribosomal subunit protein eS1 (268 aa).

The segment at 1–21 is disordered; that stretch reads MAVGKNKGLSKGGKKGGKKKV.

This sequence belongs to the eukaryotic ribosomal protein eS1 family. In terms of assembly, component of the small ribosomal subunit. Mature ribosomes consist of a small (40S) and a large (60S) subunit. The 40S subunit contains about 33 different proteins and 1 molecule of RNA (18S). The 60S subunit contains about 49 different proteins and 3 molecules of RNA (28S, 5.8S and 5S).

The protein resides in the cytoplasm. Functionally, essential for oogenesis; required for late follicle cell development. This chain is Small ribosomal subunit protein eS1, found in Drosophila virilis (Fruit fly).